A 446-amino-acid polypeptide reads, in one-letter code: Probable glycine dehydrogenase (decarboxylating) subunit 1 (446 aa).

The protein belongs to the GcvP family. N-terminal subunit subfamily. As to quaternary structure, the glycine cleavage system is composed of four proteins: P, T, L and H. In this organism, the P 'protein' is a heterodimer of two subunits.

The catalysed reaction is N(6)-[(R)-lipoyl]-L-lysyl-[glycine-cleavage complex H protein] + glycine + H(+) = N(6)-[(R)-S(8)-aminomethyldihydrolipoyl]-L-lysyl-[glycine-cleavage complex H protein] + CO2. The glycine cleavage system catalyzes the degradation of glycine. The P protein binds the alpha-amino group of glycine through its pyridoxal phosphate cofactor; CO(2) is released and the remaining methylamine moiety is then transferred to the lipoamide cofactor of the H protein. This chain is Probable glycine dehydrogenase (decarboxylating) subunit 1, found in Xanthobacter autotrophicus (strain ATCC BAA-1158 / Py2).